Consider the following 501-residue polypeptide: Dipeptide and tripeptide permease A (501 aa).

Topologically, residues 1–34 are cytoplasmic; that stretch reads MSTANNNQPESISMNAFKQPKAFYLIFSIELWER. The helical transmembrane segment at 35–55 threads the bilayer; it reads FGYYGLQGIMAVYLVKMLGMS. The Periplasmic segment spans residues 56 to 59; that stretch reads EADS. A helical transmembrane segment spans residues 60 to 80; sequence ITLFSSFSALVYGFVAIGGWL. Over 81 to 89 the chain is Cytoplasmic; the sequence is GDKVLGAKR. A run of 2 helical transmembrane segments spans residues 90 to 110 and 111 to 131; these read VIVLGALTLAVGYSMIAYSGH and EIFWVYLGMATIAVGNGLFKA. At 132 to 153 the chain is on the periplasmic side; sequence NPSSLLSTCYSKDDPRLDGAFT. The chain crosses the membrane as a helical span at residues 154-174; it reads MYYMSINIGSFFSMLATPWLA. Residues 175 to 178 lie on the Cytoplasmic side of the membrane; the sequence is AKYG. The helical transmembrane segment at 179-199 threads the bilayer; sequence WSVAFSLSVVGMLITLVNFWF. Residues 200 to 220 are Periplasmic-facing; the sequence is CRKWVKNQGSKPDFLPLQFKK. Residues 221–241 traverse the membrane as a helical segment; it reads LLMVLVGIIALITLSNWLLHN. Residues 242 to 246 are Cytoplasmic-facing; the sequence is QIIAR. The chain crosses the membrane as a helical span at residues 247-267; it reads WALALVSLGIIFIFTKETLFL. At 268–274 the chain is on the periplasmic side; it reads QGIARRR. The helical transmembrane segment at 275 to 295 threads the bilayer; sequence MIVAFLLMLEAVIFFVLYSQM. Residues 296-320 lie on the Cytoplasmic side of the membrane; the sequence is PTSLNFFAIHNVEHSIFGIGFEPEQ. The helical transmembrane segment at 321 to 341 threads the bilayer; that stretch reads FQALNPFWIMLASPILAAIYN. Residues 342–352 lie on the Periplasmic side of the membrane; sequence KMGDRLPMPHK. A helical membrane pass occupies residues 353-373; sequence FAFGMMLCSAAFLVLPWGASF. The Cytoplasmic portion of the chain corresponds to 374–383; sequence ANEHGIVSVN. The chain crosses the membrane as a helical span at residues 384 to 404; that stretch reads WLILSYALQSIGELMISGLGL. Topologically, residues 405-414 are periplasmic; sequence AMVAQLVPQR. The helical transmembrane segment at 415–435 threads the bilayer; that stretch reads LMGFIMGSWFLTTAAAALIAG. The Cytoplasmic portion of the chain corresponds to 436–460; the sequence is KVAALTAVPSDAITDAHASLAIYSH. Residues 461-481 form a helical membrane-spanning segment; it reads VFMQIGIVTAIIAVLMMLTAP. Over 482–501 the chain is Periplasmic; it reads KLYRMTLAPSDHNDVKIMTQ.

It belongs to the major facilitator superfamily. Proton-dependent oligopeptide transporter (POT/PTR) (TC 2.A.17) family. DtpA subfamily.

It is found in the cell inner membrane. Its function is as follows. Proton-dependent permease that transports di- and tripeptides. In Yersinia pestis, this protein is Dipeptide and tripeptide permease A.